The chain runs to 248 residues: Granulin (248 aa).

The protein belongs to the polyhedrin family.

Component of the virus occlusion bodies, which are large proteinaceous structures, that protect the virus from the outside environment for extended periods until they are ingested by insect larvae. In Xestia c-nigrum granulosis virus (XnGV), this protein is Granulin.